The sequence spans 427 residues: Serine--tRNA ligase (427 aa).

An L-serine-binding site is contributed by 231-233 (TAE). 262–264 (RSE) lines the ATP pocket. E285 serves as a coordination point for L-serine. Residue 349–352 (EISS) participates in ATP binding. S385 is a binding site for L-serine.

This sequence belongs to the class-II aminoacyl-tRNA synthetase family. Type-1 seryl-tRNA synthetase subfamily. As to quaternary structure, homodimer. The tRNA molecule binds across the dimer.

Its subcellular location is the cytoplasm. The catalysed reaction is tRNA(Ser) + L-serine + ATP = L-seryl-tRNA(Ser) + AMP + diphosphate + H(+). It carries out the reaction tRNA(Sec) + L-serine + ATP = L-seryl-tRNA(Sec) + AMP + diphosphate + H(+). It functions in the pathway aminoacyl-tRNA biosynthesis; selenocysteinyl-tRNA(Sec) biosynthesis; L-seryl-tRNA(Sec) from L-serine and tRNA(Sec): step 1/1. In terms of biological role, catalyzes the attachment of serine to tRNA(Ser). Is also able to aminoacylate tRNA(Sec) with serine, to form the misacylated tRNA L-seryl-tRNA(Sec), which will be further converted into selenocysteinyl-tRNA(Sec). The protein is Serine--tRNA ligase of Listeria innocua serovar 6a (strain ATCC BAA-680 / CLIP 11262).